The primary structure comprises 377 residues: Chaperone protein DnaJ (377 aa).

A J domain is found at Asp-5 to Gly-70. A CR-type zinc finger spans residues Gly-130 to His-208. Positions 143, 146, 160, 163, 182, 185, 196, and 199 each coordinate Zn(2+). CXXCXGXG motif repeat units follow at residues Cys-143–Gly-150, Cys-160–Gly-167, Cys-182–Gly-189, and Cys-196–Gly-203.

It belongs to the DnaJ family. Homodimer. It depends on Zn(2+) as a cofactor.

Its subcellular location is the cytoplasm. In terms of biological role, participates actively in the response to hyperosmotic and heat shock by preventing the aggregation of stress-denatured proteins and by disaggregating proteins, also in an autonomous, DnaK-independent fashion. Unfolded proteins bind initially to DnaJ; upon interaction with the DnaJ-bound protein, DnaK hydrolyzes its bound ATP, resulting in the formation of a stable complex. GrpE releases ADP from DnaK; ATP binding to DnaK triggers the release of the substrate protein, thus completing the reaction cycle. Several rounds of ATP-dependent interactions between DnaJ, DnaK and GrpE are required for fully efficient folding. Also involved, together with DnaK and GrpE, in the DNA replication of plasmids through activation of initiation proteins. This chain is Chaperone protein DnaJ, found in Thioalkalivibrio sulfidiphilus (strain HL-EbGR7).